The chain runs to 519 residues: Probable anion transporter 3, chloroplastic (519 aa).

A chloroplast-targeting transit peptide spans 1-76 (MAPPGQLLPL…PPPPATSLPG (76 aa)). Pro residues predominate over residues 56–72 (LPFAPPRRLSRPPPPAT). Residues 56-82 (LPFAPPRRLSRPPPPATSLPGASPGGG) are disordered. 12 consecutive transmembrane segments (helical) span residues 100–120 (VAAMLGLALALCNADRVVMSV), 138–158 (VVQSSFLWGYLVSPIIGGALV), 166–186 (VMAYGVALWSLATFLSPWAAA), 188–208 (SLWLFLSTRVLLGMAEGVALP), 229–249 (IAMAGFQLGNTIGLLLSPIIM), 253–273 (GIFGPFVIFGLFGFLWVLVWI), 326–346 (WALISANAMHSWGYFVILSWM), 362–382 (AWFSALPWVMMAVLGYVAGVV), 403–423 (IGFVGPGVALLGLNAAKSPVI), 424–444 (ASAWLTIAVGLKSFGHSGFLV), 460–480 (MSNTAGTFAAILGTVGAGFFV), and 488–508 (GFLILTSLLYFSSTLFWDIFA).

The protein belongs to the major facilitator superfamily. Sodium/anion cotransporter (TC 2.A.1.14) family.

It localises to the plastid. The protein resides in the chloroplast membrane. In terms of biological role, probable anion transporter. In Oryza sativa subsp. japonica (Rice), this protein is Probable anion transporter 3, chloroplastic (PHT4;3).